Here is a 207-residue protein sequence, read N- to C-terminus: NADH-quinone oxidoreductase chain 5 (207 aa).

It belongs to the complex I 30 kDa subunit family. In terms of assembly, NDH-1 is composed of at least 14 different subunits, Nqo1 to Nqo14. The complex has a L-shaped structure, with the hydrophobic arm (subunits Nqo7, Nqo8, Nqo10 to Nqo14) embedded in the inner membrane and the hydrophilic peripheral arm (subunits Nqo1 to Nqo6, Nqo9) protruding into the bacterial cytoplasm. The hydrophilic domain contains all the redox centers.

Its subcellular location is the cell inner membrane. The enzyme catalyses a quinone + NADH + 5 H(+)(in) = a quinol + NAD(+) + 4 H(+)(out). Its function is as follows. NDH-1 shuttles electrons from NADH, via FMN and iron-sulfur (Fe-S) centers, to quinones in the respiratory chain. The immediate electron acceptor for the enzyme in this species is believed to be ubiquinone. Couples the redox reaction to proton translocation (for every two electrons transferred, four hydrogen ions are translocated across the cytoplasmic membrane), and thus conserves the redox energy in a proton gradient. The sequence is that of NADH-quinone oxidoreductase chain 5 (nqo5) from Paracoccus denitrificans.